A 183-amino-acid chain; its full sequence is Protein GrpE (183 aa).

The span at 1–14 (MSNEENKINEEALK) shows a compositional bias: basic and acidic residues. The interval 1–20 (MSNEENKINEEALKQQDAAE) is disordered.

The protein belongs to the GrpE family. In terms of assembly, homodimer.

The protein localises to the cytoplasm. In terms of biological role, participates actively in the response to hyperosmotic and heat shock by preventing the aggregation of stress-denatured proteins, in association with DnaK and GrpE. It is the nucleotide exchange factor for DnaK and may function as a thermosensor. Unfolded proteins bind initially to DnaJ; upon interaction with the DnaJ-bound protein, DnaK hydrolyzes its bound ATP, resulting in the formation of a stable complex. GrpE releases ADP from DnaK; ATP binding to DnaK triggers the release of the substrate protein, thus completing the reaction cycle. Several rounds of ATP-dependent interactions between DnaJ, DnaK and GrpE are required for fully efficient folding. This is Protein GrpE from Vibrio vulnificus (strain CMCP6).